Consider the following 443-residue polypeptide: Glutamyl-tRNA reductase (443 aa).

Residues 49 to 52 (TCNR), S109, 114 to 116 (ETQ), and Q120 each bind substrate. C50 (nucleophile) is an active-site residue. An NADP(+)-binding site is contributed by 189 to 194 (GAGDMS).

This sequence belongs to the glutamyl-tRNA reductase family. Homodimer.

The catalysed reaction is (S)-4-amino-5-oxopentanoate + tRNA(Glu) + NADP(+) = L-glutamyl-tRNA(Glu) + NADPH + H(+). It functions in the pathway porphyrin-containing compound metabolism; protoporphyrin-IX biosynthesis; 5-aminolevulinate from L-glutamyl-tRNA(Glu): step 1/2. Functionally, catalyzes the NADPH-dependent reduction of glutamyl-tRNA(Glu) to glutamate 1-semialdehyde (GSA). This Staphylococcus saprophyticus subsp. saprophyticus (strain ATCC 15305 / DSM 20229 / NCIMB 8711 / NCTC 7292 / S-41) protein is Glutamyl-tRNA reductase.